Reading from the N-terminus, the 80-residue chain is Exodeoxyribonuclease 7 small subunit (80 aa).

It belongs to the XseB family. In terms of assembly, heterooligomer composed of large and small subunits.

The protein resides in the cytoplasm. The enzyme catalyses Exonucleolytic cleavage in either 5'- to 3'- or 3'- to 5'-direction to yield nucleoside 5'-phosphates.. Functionally, bidirectionally degrades single-stranded DNA into large acid-insoluble oligonucleotides, which are then degraded further into small acid-soluble oligonucleotides. The polypeptide is Exodeoxyribonuclease 7 small subunit (Citrobacter koseri (strain ATCC BAA-895 / CDC 4225-83 / SGSC4696)).